The sequence spans 405 residues: Glucose-1-phosphate adenylyltransferase 1 (405 aa).

Alpha-D-glucose 1-phosphate contacts are provided by residues Tyr96, Gly161, 176 to 177 (EK), and Ser194.

Belongs to the bacterial/plant glucose-1-phosphate adenylyltransferase family. In terms of assembly, homotetramer.

The catalysed reaction is alpha-D-glucose 1-phosphate + ATP + H(+) = ADP-alpha-D-glucose + diphosphate. Its pathway is glycan biosynthesis; glycogen biosynthesis. Functionally, involved in the biosynthesis of ADP-glucose, a building block required for the elongation reactions to produce glycogen. Catalyzes the reaction between ATP and alpha-D-glucose 1-phosphate (G1P) to produce pyrophosphate and ADP-Glc. The polypeptide is Glucose-1-phosphate adenylyltransferase 1 (Vibrio vulnificus (strain CMCP6)).